A 67-amino-acid polypeptide reads, in one-letter code: Medusin-H1 (67 aa).

Residues 1-22 form the signal peptide; it reads MDFLKKSLFLVLFLGFFSLSIC. Residues 23–48 constitute a propeptide that is removed on maturation; the sequence is EEEKRETEEKENEQEDDREERREEKR. A disordered region spans residues 24 to 46; it reads EEKRETEEKENEQEDDREERREE. Positions 31–40 are enriched in acidic residues; it reads EKENEQEDDR. Leucine 66 bears the Leucine amide mark.

Belongs to the frog skin active peptide (FSAP) family. Medusin subfamily. As to expression, expressed by the skin glands.

Its subcellular location is the secreted. Its function is as follows. Antimicrobial peptide with activity against Gram-positive bacteria (S.aureus, MIC=32 mg/L) and fungi (C.albicans, MIC=128 mg/L). Shows weak hemolytic activity. This is Medusin-H1 from Pithecopus hypochondrialis (Orange-legged leaf frog).